Consider the following 569-residue polypeptide: Carotenoid cleavage dioxygenase 8 homolog B, chloroplastic (569 aa).

The N-terminal 43 residues, 1-43 (MSPAMLQASSLCVSAALSGAASRPGRLASQGHQGKRAVAQPLA), are a transit peptide targeting the chloroplast. The tract at residues 23 to 81 (RPGRLASQGHQGKRAVAQPLAASAVTEAAPPAPVVAPPARPVDAPRRRGGRGGGGGGGE) is disordered. The span at 52–62 (PPAPVVAPPAR) shows a compositional bias: pro residues. 4 residues coordinate Fe cation: H251, H301, H368, and H558.

Belongs to the carotenoid oxygenase family. It depends on Fe(2+) as a cofactor. Expressed in parenchyma cells of the root stele, shoot apex, leaf buds, xylem parenchyma cells of the stem, inflorescences and panicles.

It localises to the plastid. Its subcellular location is the chloroplast. It catalyses the reaction 9-cis-10'-apo-beta-carotenal + 2 O2 = (2E,4E,6E)-7-hydroxy-4-methylhepta-2,4,6-trienal + (11R)-carlactone. It carries out the reaction all-trans-10'-apo-beta-carotenal + O2 = (2E,4E,6E)-4-methylocta-2,4,6-trienedial + 13-apo-beta-carotenone. Involved in strigolactones biosynthesis by cleaving the C(27) 9-cis-10'-apo-beta-carotenal produced by CCD7. Produces the C(19) carlactone and a C(8) hydroxyaldehyde. Also shows lower activity with all-trans-10'-apo-beta-carotenal producing a C(9) dialdehyde and the C(18) 13-apo-beta-carotenone. Strigolactones are hormones that inhibit tillering and shoot branching through the MAX-dependent pathway, contribute to the regulation of shoot architectural response to phosphate-limiting conditions and function as rhizosphere signal that stimulates hyphal branching of arbuscular mycorrhizal fungi and trigger seed germination of root parasitic weeds. The sequence is that of Carotenoid cleavage dioxygenase 8 homolog B, chloroplastic (CCD8B) from Oryza sativa subsp. japonica (Rice).